A 252-amino-acid polypeptide reads, in one-letter code: Gamma carbonic anhydrase-like 1, mitochondrial (252 aa).

Residues 1–29 (MATSIARLSRRGVTSNLIRRCFAAEAALA) constitute a mitochondrion transit peptide. Substrate-binding positions include 99–101 (RGD) and 114–115 (QE). His120 is a binding site for Zn(2+). 3 residues coordinate substrate: Arg148, Gln160, and Tyr227.

Belongs to the gamma-class carbonic anhydrase family. As to quaternary structure, component of the mitochondrial oxidoreductase respiratory chain complex I; element of the extra matrix-exposed domain, which is attached to the membrane arm of this complex. Interacts with GAMMACA2.

The protein resides in the mitochondrion membrane. In terms of biological role, involved in complex I assembly in mitochondria and respiration. The chain is Gamma carbonic anhydrase-like 1, mitochondrial (GAMMACAL1) from Arabidopsis thaliana (Mouse-ear cress).